A 304-amino-acid chain; its full sequence is ATP synthase gamma chain (304 aa).

This sequence belongs to the ATPase gamma chain family. In terms of assembly, F-type ATPases have 2 components, CF(1) - the catalytic core - and CF(0) - the membrane proton channel. CF(1) has five subunits: alpha(3), beta(3), gamma(1), delta(1), epsilon(1). CF(0) has three main subunits: a, b and c.

It is found in the cell membrane. Produces ATP from ADP in the presence of a proton gradient across the membrane. The gamma chain is believed to be important in regulating ATPase activity and the flow of protons through the CF(0) complex. The protein is ATP synthase gamma chain of Mycobacterium marinum (strain ATCC BAA-535 / M).